The primary structure comprises 208 residues: Putative thymidylate kinase (208 aa).

A defective ATP-binding region spans residues 8 to 15 (GIDGSGVS).

This sequence belongs to the thymidylate kinase family.

The enzyme catalyses dTMP + ATP = dTDP + ADP. In Aeropyrum pernix (strain ATCC 700893 / DSM 11879 / JCM 9820 / NBRC 100138 / K1), this protein is Putative thymidylate kinase (tmk).